The chain runs to 160 residues: UPF0262 protein BSUIS_A0274 (160 aa).

It belongs to the UPF0262 family.

In Brucella suis (strain ATCC 23445 / NCTC 10510), this protein is UPF0262 protein BSUIS_A0274.